The sequence spans 228 residues: 2,3-bisphosphoglycerate-dependent phosphoglycerate mutase (228 aa).

Substrate is bound by residues 8–15, 21–22, Arg60, 87–90, Lys98, 114–115, and 180–181; these read RHGQSQWN, TG, ERHY, RR, and GN. His9 functions as the Tele-phosphohistidine intermediate in the catalytic mechanism. Glu87 (proton donor/acceptor) is an active-site residue.

The protein belongs to the phosphoglycerate mutase family. BPG-dependent PGAM subfamily. In terms of assembly, homodimer.

It carries out the reaction (2R)-2-phosphoglycerate = (2R)-3-phosphoglycerate. It functions in the pathway carbohydrate degradation; glycolysis; pyruvate from D-glyceraldehyde 3-phosphate: step 3/5. Catalyzes the interconversion of 2-phosphoglycerate and 3-phosphoglycerate. The chain is 2,3-bisphosphoglycerate-dependent phosphoglycerate mutase from Sphingopyxis alaskensis (strain DSM 13593 / LMG 18877 / RB2256) (Sphingomonas alaskensis).